The primary structure comprises 373 residues: SWI/SNF-related matrix-associated actin-dependent regulator of chromatin subfamily B member 1 (373 aa).

The interval M1–S101 is DNA-binding.

It belongs to the SNF5 family. As to quaternary structure, component of the multiprotein chromatin-remodeling complexes SWI/SNF. Component of neural progenitors-specific chromatin remodeling complex (npBAF complex) and the neuron-specific chromatin remodeling complex (nBAF complex). Component of the BAF (SWI/SNF) chromatin remodeling complex. Component of the SWI/SNF-B (PBAF) chromatin remodeling complex. Binds to double-stranded DNA.

It is found in the nucleus. Involved in chromatin-remodeling. Core component of the BAF (SWI/SNF) complex. This ATP-dependent chromatin-remodeling complex plays important roles in cell proliferation and differentiation, in cellular antiviral activities and inhibition of tumor formation. Belongs to the neural progenitors-specific chromatin remodeling complex (npBAF complex) and the neuron-specific chromatin remodeling complex (nBAF complex) and may play a role in neural development. This is SWI/SNF-related matrix-associated actin-dependent regulator of chromatin subfamily B member 1 (smarcb1) from Dichotomyctere fluviatilis (Green pufferfish).